The sequence spans 899 residues: MTDVTVKSLAAEIQTPVDRLIQQFADAGMTKSASDAVTQHEKETLLAHLNRDRGNAQGKLTLQRKTRSTLNVPSTGGKSKSVQIEVRKTRTYVKRDPIDAQQAEEEEQARREAEEQAQRAAEEQAKREAELREAAEKAKRAADEQAKREAAEKAKRDVAEKEKVTNQQNENMTKPAQAEKAKREAEAAELKRKAEEAARLKVEEEARRIAEEARRMAEENAGRWEAESAKPEESADYHVTTSHHAREAEDENDRQVEGERRSRSRAGKVTKQKKGNRQSESKADREEARAVTRGGKGKRKPSSLQQSFNKPVQAVNRDVVIGETVTVAELANKMAVKGSQVIKVMMKLGAMATINQVIDQETAQLVAEEMGHKVILRRENELEEAVMSDRDTGVAAEARAPVVTIMGHVDHGKTSLLDYIRSTKVAAGEAGGITQHIGAYHVETDNGMITFLDTPGHAAFTAMRARGAQATDIVVLVVAADDGVMPQTIEAIQHAKAAQVPVVVAVNKIDKPEADPDRVKTELSQYGVMPEEWGGESQFVHVSAKAGTGIDELLDAILLQAEVLELKAVRSGMANGVVIESFLDKGRGPVATVLVREGTLNKGDIVLCGFEYGRVRAMRDELGREITSAGPSIPVEILGMSGVPAAGDEATVVRDEKKAREVALYRQGKFREVKLARQQKSKLENMFANMTEGEVSELNIVLKSDVQGSCEAISDSLQKLSTDEVKVKIVGSGVGGITETDATLAAASNAIILGFNVRADASARRIVESESLDLRYYSVIYDLLDEVKQAMSGMLAPEYKQEIIGLAEVRDVFKSPKFGAIAGCMVTEGIVKRHNKIRVLRDNVVIYEGELESLRRFKDDVNEVRNGMECGIGVKNYNDVRPGDMIEVFETIEIKRTIA.

Disordered regions lie at residues 65 to 84 (KTRS…SVQI) and 91 to 310 (TYVK…SFNK). Residues 68 to 82 (STLNVPSTGGKSKSV) show a composition bias toward polar residues. A compositionally biased stretch (basic and acidic residues) spans 108 to 164 (QARREAEEQAQRAAEEQAKREAELREAAEKAKRAADEQAKREAAEKAKRDVAEKEKV). Polar residues predominate over residues 165 to 174 (TNQQNENMTK). The segment covering 177-236 (QAEKAKREAEAAELKRKAEEAARLKVEEEARRIAEEARRMAEENAGRWEAESAKPEESAD) has biased composition (basic and acidic residues). Positions 262–276 (SRSRAGKVTKQKKGN) are enriched in basic residues. Over residues 277 to 290 (RQSESKADREEARA) the composition is skewed to basic and acidic residues. Residues 398 to 567 (ARAPVVTIMG…LLQAEVLELK (170 aa)) form the tr-type G domain. Residues 407–414 (GHVDHGKT) are G1. 407–414 (GHVDHGKT) is a binding site for GTP. Residues 432–436 (GITQH) form a G2 region. Residues 453 to 456 (DTPG) are G3. GTP is bound by residues 453–457 (DTPGH) and 507–510 (NKID). Residues 507-510 (NKID) are G4. Positions 543–545 (SAK) are G5.

The protein belongs to the TRAFAC class translation factor GTPase superfamily. Classic translation factor GTPase family. IF-2 subfamily.

It is found in the cytoplasm. One of the essential components for the initiation of protein synthesis. Protects formylmethionyl-tRNA from spontaneous hydrolysis and promotes its binding to the 30S ribosomal subunits. Also involved in the hydrolysis of GTP during the formation of the 70S ribosomal complex. The polypeptide is Translation initiation factor IF-2 (Pectobacterium carotovorum subsp. carotovorum (strain PC1)).